The primary structure comprises 987 residues: MTMAGGRKGLVAPQNTFLENIVRRSNDTNFVLGNAQIVDWPIVYSNDGFCKLSGYHRAEVMQKSSTCSFMYGELTDKDTIEKVRQTFENYEMNSFEILMYKKNRTPVWFFVKIAPIRNEQDKVVLFLCTFSDITAFKQPIEDDSCKGWGKFARLTRALTSSRGVLQQLAPSVQKGENVHKHSRLAEVLQLGSDILPQYKQEAPKTPPHIILHYCVFKTTWDWIILILTFYTAILVPYNVSFKTRQNNVAWLVVDSIVDVIFLVDIVLNFHTTFVGPAGEVISDPKLIRMNYLKTWFVIDLLSCLPYDVINAFENVDEVSAFMGDPGKIGFADQIPPPLEGRESQGISSLFSSLKVVRLLRLGRVARKLDHYIEYGAAVLVLLVCVFGLAAHWMACIWYSIGDYEIFDEDTKTIRNNSWLYQLAMDIGTPYQFNGSGSGKWEGGPSKNSVYISSLYFTMTSLTSVGFGNIAPSTDIEKIFAVAIMMIGSLLYATIFGNVTTIFQQMYANTNRYHEMLNSVRDFLKLYQVPKGLSERVMDYIVSTWSMSRGIDTEKVLQICPKDMRADICVHLNRKVFKEHPAFRLASDGCLRALAMEFQTVHCAPGDLIYHAGESVDSLCFVVSGSLEVIQDDEVVAILGKGDVFGDVFWKEATLAQSCANVRALTYCDLHVIKRDALQKVLEFYTAFSHSFSRNLILTYNLRKRIVFRKISDVKREEEERMKRKNEAPLILPPDHPVRRLFQRFRQQKEARLAAERGGRDLDDLDVEKGSVLTEHSHHGLAKASVVTVRESPATPVAFPAAAAPAGLDHARLQAPGAEGLGPKAGGADCAKRKGWARFKDACGQAEDWSKVSKAESMETLPERTKAAGEATLKKTDSCDSGITKSDLRLDNVGEARSPQDRSPILAEVKHSFYPIPEQTLQAAVLEVKHELKEDIKALSTKMTSIEKQLSEILRILTSRRSSQSPQELFEISRPQSPESERDIFGAS.

At 1-220 (MTMAGGRKGL…LHYCVFKTTW (220 aa)) the chain is on the cytoplasmic side. The region spanning 14–94 (QNTFLENIVR…QTFENYEMNS (81 aa)) is the PAS domain. In terms of domain architecture, PAC spans 93–145 (NSFEILMYKKNRTPVWFFVKIAPIRNEQDKVVLFLCTFSDITAFKQPIEDDSC). The interval 151-162 (FARLTRALTSSR) is required for phosphatidylinositol bisphosphate binding. Residues 221–241 (DWIILILTFYTAILVPYNVSF) traverse the membrane as a helical segment. Residues 242–248 (KTRQNNV) are Extracellular-facing. Residues 249 to 269 (AWLVVDSIVDVIFLVDIVLNF) traverse the membrane as a helical segment. Topologically, residues 270-290 (HTTFVGPAGEVISDPKLIRMN) are cytoplasmic. The helical transmembrane segment at 291–309 (YLKTWFVIDLLSCLPYDVI) threads the bilayer. Topologically, residues 310–345 (NAFENVDEVSAFMGDPGKIGFADQIPPPLEGRESQG) are extracellular. The helical; Voltage-sensor transmembrane segment at 346–368 (ISSLFSSLKVVRLLRLGRVARKL) threads the bilayer. Residues 369–377 (DHYIEYGAA) lie on the Cytoplasmic side of the membrane. Residues 378–399 (VLVLLVCVFGLAAHWMACIWYS) form a helical membrane-spanning segment. At 400-448 (IGDYEIFDEDTKTIRNNSWLYQLAMDIGTPYQFNGSGSGKWEGGPSKNS) the chain is on the extracellular side. N-linked (GlcNAc...) asparagine glycosylation is found at Asn-415 and Asn-433. Positions 449–470 (VYISSLYFTMTSLTSVGFGNIA) form an intramembrane region, pore-forming. The Selectivity filter signature appears at 463-468 (SVGFGN). Residues 471–477 (PSTDIEK) are Extracellular-facing. A helical transmembrane segment spans residues 478–498 (IFAVAIMMIGSLLYATIFGNV). At 499–987 (TTIFQQMYAN…ESERDIFGAS (489 aa)) the chain is on the cytoplasmic side. The calmodulin-binding stretch occupies residues 673 to 770 (KRDALQKVLE…LDDLDVEKGS (98 aa)). Residues 699–701 (YNL) form an interaction with cyclic nucleotide-binding pocket region. Residues 922–962 (AAVLEVKHELKEDIKALSTKMTSIEKQLSEILRILTSRRSS) form a CAD (involved in subunit assembly) region. The interval 960–987 (RSSQSPQELFEISRPQSPESERDIFGAS) is disordered. Ser-972, Ser-976, and Ser-979 each carry phosphoserine. The span at 978–987 (ESERDIFGAS) shows a compositional bias: basic and acidic residues.

Belongs to the potassium channel family. H (Eag) (TC 1.A.1.20) subfamily. Kv10.1/KCNH1 sub-subfamily. Homomultimer. The potassium channel is composed of a homo- or heterotetrameric complex of pore-forming alpha subunits that can associate with modulating beta subunits. Heteromultimer with KCNH5/EAG2. Interacts with ALG10B. Interacts with RABEP1. Interacts (via C-terminus) with CTTN. Interacts (via C-terminal cytoplasmic region) with Ca(2+)-bound calmodulin. Post-translationally, channel activity is regulated via tyrosine phosphorylation/dephosphorylation by SRC and PTPN6. Detected in cerebellum, cortex and retina.

It is found in the cell membrane. The protein resides in the nucleus inner membrane. Its subcellular location is the cell projection. The protein localises to the dendrite. It localises to the axon. It is found in the presynaptic cell membrane. The protein resides in the perikaryon. Its subcellular location is the postsynaptic density membrane. The protein localises to the early endosome membrane. It catalyses the reaction K(+)(in) = K(+)(out). Its activity is regulated as follows. Channel activity is inhibited by interaction with Ca(2+)-bound calmodulin. Interaction of a single pore-forming alpha subunit with a calmodulin chain is sufficient to promote channel closure. Extracellular magnesium ion concentrations up to 4 mM modulate channel activity by slowing down current activation in a reversible fashion. Channel activity is not regulated by cyclic nucleotides. Channel activity is inhibited by binding intracellular phosphatidylinositol-3,5-bisphosphate and phosphatidylinositol-4,5-bisphosphate (PIP2), but is not inhibited by phosphatidylinositol 4-phosphate. In terms of biological role, pore-forming (alpha) subunit of a voltage-gated delayed rectifier potassium channel that mediates outward-rectifying potassium currents which, on depolarization, reaches a steady-state level and do not inactivate. The activation kinetics depend on the prepulse potential and external divalent cation concentration. With negative prepulses, the current activation is delayed and slowed down several fold, whereas more positive prepulses speed up activation. The time course of activation is biphasic with a fast and a slowly activating current component. Activates at more positive membrane potentials and exhibit a steeper activation curve. Channel properties are modulated by subunit assembly. Mediates IK(NI) current in myoblasts. Involved in the regulation of cell proliferation and differentiation, in particular adipogenic and osteogenic differentiation in bone marrow-derived mesenchymal stem cells (MSCs). The polypeptide is Voltage-gated delayed rectifier potassium channel KCNH1 (Bos taurus (Bovine)).